The primary structure comprises 256 residues: Small ribosomal subunit protein uS2 (256 aa).

This sequence belongs to the universal ribosomal protein uS2 family.

The protein is Small ribosomal subunit protein uS2 of Streptococcus agalactiae serotype III (strain NEM316).